The following is a 261-amino-acid chain: MRIALGIEYDGNGYFGWQRQAEVDSVQAQLERALSIVANEPIGVFCAGRTDAGVHATGQVVHFETHAIRNEGAWTLGVNANLPDNIAVRWVKEVDDSFHARFSATARRYRYVIYNHSFRPGILRHGVSHYHGDIDADRMHQAAQALLGEQDFTSFRAVQCQSKTPFRNVHCVNVTRQGMYVIVDIAANAFLHHMVRNIVGSLLEIGLGNQPLTWMGDLLALKDRNQAAATAKPHGLYLVDVTYPEQYQLPKLALGPLFMLD.

The active-site Nucleophile is Asp51. Tyr109 contributes to the substrate binding site.

It belongs to the tRNA pseudouridine synthase TruA family. In terms of assembly, homodimer.

It catalyses the reaction uridine(38/39/40) in tRNA = pseudouridine(38/39/40) in tRNA. Its function is as follows. Formation of pseudouridine at positions 38, 39 and 40 in the anticodon stem and loop of transfer RNAs. This chain is tRNA pseudouridine synthase A, found in Shewanella baltica (strain OS223).